The chain runs to 1949 residues: Protein GREB1 (1949 aa).

Disordered stretches follow at residues 52 to 77 (EGGSRVDNEEEEEEGEGGLETNGPPN), 302 to 334 (ILSNSGPPKKRHKGWSPESPSAPDGGCPQGGGN), and 1085 to 1210 (EALE…GQRS). Over residues 59 to 68 (NEEEEEEGEG) the composition is skewed to acidic residues. Composition is skewed to basic and acidic residues over residues 1085 to 1095 (EALESDAEKLS) and 1110 to 1126 (TSEKRSPMKRERSRSHD). Over residues 1127–1147 (SASSSLSSKASGSALGGESSA) the composition is skewed to low complexity. Basic and acidic residues predominate over residues 1166-1178 (PAEEGRAPGEKQR). The chain crosses the membrane as a helical span at residues 1868 to 1888 (DLLFSGLLLYLCDSFVGASFL).

The protein belongs to the GREB1 family. As to expression, expressed in proliferating prostatic tissue and prostate cancer.

The protein localises to the membrane. Its function is as follows. May play a role in estrogen-stimulated cell proliferation. Acts as a regulator of hormone-dependent cancer growth in breast and prostate cancers. The protein is Protein GREB1 (GREB1) of Homo sapiens (Human).